Reading from the N-terminus, the 523-residue chain is NAD(P)H-quinone oxidoreductase subunit 2 (523 aa).

The next 14 membrane-spanning stretches (helical) occupy residues A29–A49, W57–W77, L94–W114, P123–G143, L147–Y167, L182–L202, A223–F243, P255–L275, L291–Q311, M317–T337, V345–F365, L389–G409, L424–I444, and I477–F497.

Belongs to the complex I subunit 2 family. In terms of assembly, NDH-1 can be composed of about 15 different subunits; different subcomplexes with different compositions have been identified which probably have different functions.

The protein localises to the cellular thylakoid membrane. The catalysed reaction is a plastoquinone + NADH + (n+1) H(+)(in) = a plastoquinol + NAD(+) + n H(+)(out). It carries out the reaction a plastoquinone + NADPH + (n+1) H(+)(in) = a plastoquinol + NADP(+) + n H(+)(out). Functionally, NDH-1 shuttles electrons from an unknown electron donor, via FMN and iron-sulfur (Fe-S) centers, to quinones in the respiratory and/or the photosynthetic chain. The immediate electron acceptor for the enzyme in this species is believed to be plastoquinone. Couples the redox reaction to proton translocation, and thus conserves the redox energy in a proton gradient. Cyanobacterial NDH-1 also plays a role in inorganic carbon-concentration. The polypeptide is NAD(P)H-quinone oxidoreductase subunit 2 (Prochlorococcus marinus (strain MIT 9313)).